The sequence spans 242 residues: Ribonuclease PH (242 aa).

Residues Arg86 and 124 to 126 contribute to the phosphate site; that span reads GTR.

The protein belongs to the RNase PH family. As to quaternary structure, homohexameric ring arranged as a trimer of dimers.

It catalyses the reaction tRNA(n+1) + phosphate = tRNA(n) + a ribonucleoside 5'-diphosphate. In terms of biological role, phosphorolytic 3'-5' exoribonuclease that plays an important role in tRNA 3'-end maturation. Removes nucleotide residues following the 3'-CCA terminus of tRNAs; can also add nucleotides to the ends of RNA molecules by using nucleoside diphosphates as substrates, but this may not be physiologically important. Probably plays a role in initiation of 16S rRNA degradation (leading to ribosome degradation) during starvation. This is Ribonuclease PH from Caulobacter sp. (strain K31).